The primary structure comprises 633 residues: Telomere-binding protein 1 (633 aa).

The disordered stretch occupies residues 253–272 (HAADRDDDENSSGCVHPSTS). Positions 263–272 (SSGCVHPSTS) are enriched in polar residues. The Ubiquitin-like domain maps to 351-430 (VKLTIKSFNI…LNDIGFTLEC (80 aa)). Residues 506–615 (PFADPNSLAL…RVLAAQAYWS (110 aa)) are sufficient for telomeric DNA binding. Residues 529–588 (GQRRIRRPFTVAEVELLVEAVEHLGTGRWRDVKFRAFENVHHRTYVDLKDKWKTLVHTAS) form the HTH myb-type domain. One can recognise an SANT domain in the interval 534-584 (RRPFTVAEVELLVEAVEHLGTGRWRDVKFRAFENVHHRTYVDLKDKWKTLV). A DNA-binding region (H-T-H motif) is located at residues 557–584 (WRDVKFRAFENVHHRTYVDLKDKWKTLV).

Homodimer. In terms of tissue distribution, ubiquitous.

It is found in the chromosome. Its subcellular location is the telomere. Binds the telomeric double-stranded 5'TTTAGGG-3' repeat and regulates telomere length and structure. In Oryza sativa subsp. japonica (Rice), this protein is Telomere-binding protein 1 (TBP1).